Here is a 729-residue protein sequence, read N- to C-terminus: MAPPAKRARGLTLPGYKYLGPGNSLDQGEPTNPSDAAAKEHDEAYDKYIKSGKNPYFYFSAADEKFIKETEHAKDYGGKIGHYFFRAKRAFAPKLSETDSPTTSQQPEVRRSPRKHPGSKPPGKRPAPRHIFINLAKKKAKGTSNTNSNSMSENVEQHNPINAGTELSATGNESGGGGGGGGGRGAGGVGVSTGTFNNQTEFQYLGEGLVRITAHASRLIHLNMPEHETYKRIHVLNSESGVAGQMVQDDAHTQMVTPWSLIDANAWGVWFNPADWQLISNNMTEINLVSFEQEIFNVVLKTITESATSPPTKIYNNDLTASLMVALDTNNTLPYTPAAPRSETLGFYPWLPTKPTQYRYYLSCIRNLNPPTYTGQSQQITDSIQTGLHSDIMFYTIENAVPIHLLRTGDEFSTGIYHFDTKPLKLTHSWQTNRSLGLPPKLLTEPTTEGDQHPGTLPAANTRKGYHQTINNSYTEATAIRPAQVGYNTPYMNFEYSNGGPFLTPIVPTADTQYNDDEPNGAIRFTMDYQHGHLTTSSQELERYTFNPQSKCGRAPKQQFNQQAPLNLENTNNGTLLPSDPIGGKSNMHFMNTLNTYGPLTALNNTAPVFPNGQIWDKELDTDLKPRLHVTAPFVCKNNPPGQLFVKIAPNLTDDFNADSPQQPRIITYSNFWWKGTLTFTAKMRSSNMWNPIQQHTTTAENIGNYIPTNIGGIRMFPEYSQLIPRKLY.

Disordered regions lie at residues 1-37 (MAPP…SDAA), 94-129 (KLSE…PAPR), and 163-186 (AGTE…GRGA). The Nuclear localization signal motif lies at 4–12 (PAKRARGLT). The interval 18 to 63 (YLGPGNSLDQGEPTNPSDAAAKEHDEAYDKYIKSGKNPYFYFSAAD) is phospholipase A2-like. 2 stretches are compositionally biased toward polar residues: residues 24 to 34 (SLDQGEPTNPS) and 98 to 107 (TDSPTTSQQP). Over residues 112–128 (SPRKHPGSKPPGKRPAP) the composition is skewed to basic residues. Positions 163–172 (AGTELSATGN) are enriched in polar residues. Gly residues predominate over residues 173–186 (ESGGGGGGGGGRGA). Asparagine 330 is a binding site for Mg(2+). Positions 437 to 465 (GLPPKLLTEPTTEGDQHPGTLPAANTRKG) are disordered.

This sequence belongs to the parvoviridae capsid protein family.

It localises to the virion. Its subcellular location is the host nucleus. In terms of biological role, capsid protein self-assembles to form an icosahedral capsid with a T=1 symmetry, about 22 nm in diameter, and consisting of 60 copies of two size variants of the capsid proteins, VP1 and VP2, which differ by the presence of an N-terminal extension in the minor protein VP1. The capsid encapsulates the genomic ssDNA. Capsid proteins are responsible for the attachment to host cell receptors. This attachment induces virion internalization predominantly through clathrin-dependent endocytosis. Binding to the host receptors also induces capsid rearrangements leading to surface exposure of VP1 N-terminus, specifically its phospholipase A2-like region and putative nuclear localization signal(s). VP1 N-terminus might serve as a lipolytic enzyme to breach the endosomal membrane during entry into host cell and might contribute to virus transport to the nucleus. This Sus scrofa (Pig) protein is Capsid protein VP1.